The primary structure comprises 943 residues: Isoleucine--tRNA ligase (943 aa).

A 'HIGH' region motif is present at residues 59-69; the sequence is PYANGQIHLGH. Glu577 contacts L-isoleucyl-5'-AMP. The 'KMSKS' region motif lies at 618–622; that stretch reads KMSKS. Residue Lys621 coordinates ATP. Zn(2+) is bound by residues Cys906, Cys909, Cys926, and Cys929.

This sequence belongs to the class-I aminoacyl-tRNA synthetase family. IleS type 1 subfamily. In terms of assembly, monomer. Zn(2+) serves as cofactor.

Its subcellular location is the cytoplasm. The catalysed reaction is tRNA(Ile) + L-isoleucine + ATP = L-isoleucyl-tRNA(Ile) + AMP + diphosphate. Functionally, catalyzes the attachment of isoleucine to tRNA(Ile). As IleRS can inadvertently accommodate and process structurally similar amino acids such as valine, to avoid such errors it has two additional distinct tRNA(Ile)-dependent editing activities. One activity is designated as 'pretransfer' editing and involves the hydrolysis of activated Val-AMP. The other activity is designated 'posttransfer' editing and involves deacylation of mischarged Val-tRNA(Ile). In Xanthomonas axonopodis pv. citri (strain 306), this protein is Isoleucine--tRNA ligase.